A 491-amino-acid chain; its full sequence is Probable CtpA-like serine protease (491 aa).

The disordered stretch occupies residues 1–22 (MSESKDTTEVNQEVNEKASSQS). The segment covering 9–22 (EVNQEVNEKASSQS) has biased composition (polar residues). The helical transmembrane segment at 34-54 (FIIILIVTILVTAMIAVFATI) threads the bilayer. The PDZ domain maps to 119–201 (TKSFNEDVSG…TKVTLTIERG (83 aa)). Catalysis depends on charge relay system residues serine 324, aspartate 335, and lysine 349.

The protein belongs to the peptidase S41A family.

Its subcellular location is the cell membrane. This chain is Probable CtpA-like serine protease, found in Staphylococcus saprophyticus subsp. saprophyticus (strain ATCC 15305 / DSM 20229 / NCIMB 8711 / NCTC 7292 / S-41).